We begin with the raw amino-acid sequence, 276 residues long: Rhamnulose-1-phosphate aldolase (276 aa).

Glu-117 is an active-site residue. His-141, His-143, and His-212 together coordinate Zn(2+).

The protein belongs to the aldolase class II family. RhaD subfamily. As to quaternary structure, homotetramer. Zn(2+) is required as a cofactor.

Its subcellular location is the cytoplasm. The catalysed reaction is L-rhamnulose 1-phosphate = (S)-lactaldehyde + dihydroxyacetone phosphate. It functions in the pathway carbohydrate degradation; L-rhamnose degradation; glycerone phosphate from L-rhamnose: step 3/3. Its function is as follows. Catalyzes the reversible cleavage of L-rhamnulose-1-phosphate to dihydroxyacetone phosphate (DHAP) and L-lactaldehyde. This chain is Rhamnulose-1-phosphate aldolase, found in Klebsiella pneumoniae subsp. pneumoniae (strain ATCC 700721 / MGH 78578).